A 75-amino-acid chain; its full sequence is UPF0270 protein PFLU_4323 (75 aa).

The protein belongs to the UPF0270 family.

The sequence is that of UPF0270 protein PFLU_4323 from Pseudomonas fluorescens (strain SBW25).